A 296-amino-acid polypeptide reads, in one-letter code: Pyruvate synthase subunit PorB (296 aa).

Residues Cys17, Cys20, and Cys45 each coordinate [4Fe-4S] cluster. Over residues 140-150 the composition is skewed to polar residues; sequence TPFDASTTTTP. Residues 140–159 are disordered; it reads TPFDASTTTTPAGKVSFGNP. Cys210 lines the [4Fe-4S] cluster pocket.

In terms of assembly, heterotetramer of one alpha, one beta, one delta and one gamma chain. [4Fe-4S] cluster is required as a cofactor.

It catalyses the reaction 2 oxidized [2Fe-2S]-[ferredoxin] + pyruvate + CoA = 2 reduced [2Fe-2S]-[ferredoxin] + acetyl-CoA + CO2 + H(+). This is Pyruvate synthase subunit PorB (porB) from Methanosarcina barkeri (strain Fusaro / DSM 804).